Consider the following 487-residue polypeptide: Serine/threonine-protein phosphatase 2A activator 1 (487 aa).

Disordered regions lie at residues 1–28 (MPMIPPALRRTQAAATPTTSSPAASSST) and 426–487 (GGIQ…PKPE).

This sequence belongs to the PTPA-type PPIase family.

The protein localises to the cytoplasm. It localises to the nucleus. The enzyme catalyses [protein]-peptidylproline (omega=180) = [protein]-peptidylproline (omega=0). Functionally, PPIases accelerate the folding of proteins. It catalyzes the cis-trans isomerization of proline imidic peptide bonds in oligopeptides. Acts as a regulatory subunit for PP2A-like phosphatases modulating their activity or substrate specificity, probably by inducing a conformational change in the catalytic subunit, a direct target of the PPIase. Can reactivate inactive phosphatase PP2A-phosphatase methylesterase complexes (PP2Ai) in presence of ATP and Mg(2+) by dissociating the inactive form from the complex. This is Serine/threonine-protein phosphatase 2A activator 1 (RRD1) from Mycosarcoma maydis (Corn smut fungus).